The following is a 392-amino-acid chain: Casein kinase II subunit alpha (392 aa).

Residues 39-324 (YQLVRKLGRG…AREAMDHPYF (286 aa)) form the Protein kinase domain. ATP is bound by residues 45 to 53 (LGRGKYSEV) and Lys68. The Proton acceptor role is filled by Asp156. Positions 334-355 (MGGSNMPSGSSTPVSSASMMSG) are disordered. A compositionally biased stretch (low complexity) spans 337–354 (SNMPSGSSTPVSSASMMS).

This sequence belongs to the protein kinase superfamily. Ser/Thr protein kinase family. CK2 subfamily. Tetramer composed of an alpha chain, an alpha' and two beta chains.

It localises to the nucleus. The catalysed reaction is L-seryl-[protein] + ATP = O-phospho-L-seryl-[protein] + ADP + H(+). It carries out the reaction L-threonyl-[protein] + ATP = O-phospho-L-threonyl-[protein] + ADP + H(+). Functionally, catalytic subunit of a constitutively active serine/threonine-protein kinase complex that phosphorylates a large number of substrates containing acidic residues C-terminal to the phosphorylated serine or threonine. Regulates numerous cellular processes, such as cell cycle progression, apoptosis and transcription, as well as viral infection. May act as a regulatory node which integrates and coordinates numerous signals leading to an appropriate cellular response. During mitosis, functions as a component of the p53/TP53-dependent spindle assembly checkpoint (SAC) that maintains cyclin-B-CDK1 activity and G2 arrest in response to spindle damage. Can also negatively regulate apoptosis. Phosphorylates the caspases CASP9 and CASP2 and the apoptotic regulator NOL3. Phosphorylation protects CASP9 from cleavage and activation by CASP8, and inhibits the dimerization of CASP2 and activation of CASP8. Plays an important role in the circadian clock function by phosphorylating BMAL1. The sequence is that of Casein kinase II subunit alpha (csnk2a1) from Xenopus laevis (African clawed frog).